The sequence spans 1101 residues: ATP-citrate synthase (1101 aa).

One can recognise an ATP-grasp domain in the interval 4–265; sequence KAISEQTGKE…LDAKSGASLK (262 aa). Residues Lys-58, Arg-66, Gly-67, Pro-109, Val-111, and Glu-118 each contribute to the ATP site. At Tyr-131 the chain carries Phosphotyrosine. Asp-216 contacts ATP. Residues Asp-257, Ser-260, and Ala-262 each contribute to the Mg(2+) site. Ser-263 carries the phosphoserine modification. Citrate contacts are provided by Gly-309, Asn-346, Thr-348, Tyr-364, and Arg-379. Residues 441–457 are compositionally biased toward low complexity; that stretch reads ASGSTSTPAPSRTASFS. The interval 441 to 487 is disordered; it reads ASGSTSTPAPSRTASFSESRADEVAPAKKAKPAMPQDSVPSPRSLQG. Position 447 is a phosphothreonine (Thr-447). Ser-451 is subject to Phosphoserine. Residue Ser-455 is modified to Phosphoserine; by PKA and PKB/AKT1 or PKB/AKT2 or BCKDK. Residues Ser-459 and Ser-481 each carry the phosphoserine modification. Over residues 478-487 the composition is skewed to polar residues; it reads SVPSPRSLQG. N6-acetyllysine; alternate is present on residues Lys-540, Lys-546, and Lys-554. Glycyl lysine isopeptide (Lys-Gly) (interchain with G-Cter in ubiquitin); alternate cross-links involve residues Lys-540, Lys-546, and Lys-554. At Thr-639 the chain carries Phosphothreonine. A Phosphoserine modification is found at Ser-663. Phosphotyrosine is present on Tyr-682. His-760 (tele-phosphohistidine intermediate) is an active-site residue. Residue 779–789 coordinates CoA; the sequence is LKEAGVFVPRS. Ser-839 is subject to Phosphoserine. 4 positions are modified to N6-acetyllysine: Lys-948, Lys-968, Lys-978, and Lys-1077. Ser-1100 bears the Phosphoserine mark.

The protein in the N-terminal section; belongs to the succinate/malate CoA ligase beta subunit family. It in the C-terminal section; belongs to the succinate/malate CoA ligase alpha subunit family. Homotetramer. Requires Mg(2+) as cofactor. Post-translationally, phosphorylated by PKA and GSK3 in a sequential manner; phosphorylation results in activation of its activity. Phosphorylation on Thr-447 and Ser-451 depends on the phosphorylation state of Ser-455. Phosphorylation on Ser-455 is decreased by prior phosphorylation on the other 2 residues. Phosphorylated at Ser-455 by BCKDK and dephosphorylated by protein phosphatase PPM1K. ISGylated. In terms of processing, acetylated at Lys-540, Lys-546 and Lys-554 by KAT2B/PCAF. Acetylation is promoted by glucose and stabilizes the protein, probably by preventing ubiquitination at the same sites. Acetylation promotes de novo lipid synthesis. Deacetylated by SIRT2. Post-translationally, ubiquitinated at Lys-540, Lys-546 and Lys-554 by the BCR(KLHL25) E3 ubiquitin ligase complex and UBR4, leading to its degradation. Ubiquitination is probably inhibited by acetylation at same site. BCR(KLHL25)-mediated degradation of ACLY promotes fatty acid oxidation and is required for differentiation of inducible regulatory T (iTreg) cells.

The protein resides in the cytoplasm. It is found in the cytosol. It catalyses the reaction oxaloacetate + acetyl-CoA + ADP + phosphate = citrate + ATP + CoA. Phosphorylation results in activation of its activity. Glucose 6-phosphate, fructose 6-phosphate, fructose 2,6-bisphosphate, ribulose 5-phosphate, and fructose 1,6-bisphosphate also act as activators. Catalyzes the cleavage of citrate into oxaloacetate and acetyl-CoA, the latter serving as common substrate in multiple biochemical reactions in protein, carbohydrate and lipid metabolism. The sequence is that of ATP-citrate synthase (ACLY) from Homo sapiens (Human).